The following is a 449-amino-acid chain: Methylenetetrahydrofolate--tRNA-(uracil-5-)-methyltransferase TrmFO (449 aa).

10–15 is an FAD binding site; it reads GGGLAG.

It belongs to the MnmG family. TrmFO subfamily. Requires FAD as cofactor.

It is found in the cytoplasm. The enzyme catalyses uridine(54) in tRNA + (6R)-5,10-methylene-5,6,7,8-tetrahydrofolate + NADH + H(+) = 5-methyluridine(54) in tRNA + (6S)-5,6,7,8-tetrahydrofolate + NAD(+). It carries out the reaction uridine(54) in tRNA + (6R)-5,10-methylene-5,6,7,8-tetrahydrofolate + NADPH + H(+) = 5-methyluridine(54) in tRNA + (6S)-5,6,7,8-tetrahydrofolate + NADP(+). Catalyzes the folate-dependent formation of 5-methyl-uridine at position 54 (M-5-U54) in all tRNAs. The chain is Methylenetetrahydrofolate--tRNA-(uracil-5-)-methyltransferase TrmFO from Sphingopyxis alaskensis (strain DSM 13593 / LMG 18877 / RB2256) (Sphingomonas alaskensis).